The primary structure comprises 754 residues: Putative sulfate transporter YPR003C (754 aa).

Residues 1–91 (MTSNNSLLGR…NTSNTNNNDS (91 aa)) are disordered. Residues 1 to 118 (MTSNNSLLGR…SWLPEYTFNK (118 aa)) are Cytoplasmic-facing. Over residues 25-45 (RSVDQRDTFSDNFDYDKDSSN) the composition is skewed to basic and acidic residues. The segment covering 65-89 (NSRSGCTNNTNNTNNTSNTSNTNNN) has biased composition (low complexity). Residues 119–139 (LWGDVIAGISVASFQIPLALS) form a helical membrane-spanning segment. Residues 140–146 (YTTSIAH) are Lumenal-facing. A helical transmembrane segment spans residues 147–167 (VPPLCGLYSLAISPFVYGILG). Topologically, residues 168–172 (SVPQM) are cytoplasmic. A helical membrane pass occupies residues 173–193 (IVGPESAISLVVGQAVESITL). Topologically, residues 194-199 (HKENVS) are lumenal. Residues 200 to 220 (LIDISTVITFVSGTILLFSGI) form a helical membrane-spanning segment. At 221–232 (SRFGFLGNVLSK) the chain is on the cytoplasmic side. A helical transmembrane segment spans residues 233-253 (ALLRGFISSVGLVMIINSLIS). Residues 254–282 (ELKLDKFLVSLPQHYHTPFEKILFLIDYA) are Lumenal-facing. Residues 283–303 (PAQYHIPTAIFSGCCLIVLFL) form a helical membrane-spanning segment. Topologically, residues 304–317 (TRLLKRKLMKYHKS) are cytoplasmic. Residues 318-338 (AIFFPDILLVVIVTILISMKF) traverse the membrane as a helical segment. Over 339–370 (NLKHRYGISIIGDFSMDNFDELKNPLTRPRRK) the chain is Lumenal. The helical transmembrane segment at 371–391 (LIPDLFSASLIVAMLGFFEST) threads the bilayer. The Cytoplasmic portion of the chain corresponds to 392–410 (TASKSLGTTYNLTVSSNRE). The helical transmembrane segment at 411–431 (LVALGFMNIVISLFGALPAFG) threads the bilayer. Over 432–450 (GYGRSKINALSGAQSVMSG) the chain is Lumenal. A helical transmembrane segment spans residues 451 to 471 (VFMGVITLITMNLLLQFVHYI). Residues 472–474 (PNC) are Cytoplasmic-facing. A helical membrane pass occupies residues 475–495 (VLSVITTIIGISLLEEVPGDI). At 496 to 517 (KFHLRCGGFSELFVFAVTFCTT) the chain is on the lumenal side. A helical membrane pass occupies residues 518–538 (IFYSIEAGICIGCVYSIINII). The Cytoplasmic segment spans residues 539–754 (KHSAKSRIQI…SNTLFNSSLV (216 aa)). The STAS domain occupies 574-725 (DVEGTEEIEG…DSIDAALYEI (152 aa)).

Belongs to the SLC26A/SulP transporter (TC 2.A.53) family.

Its subcellular location is the endoplasmic reticulum membrane. Functionally, possible sulfate transporter. The chain is Putative sulfate transporter YPR003C from Saccharomyces cerevisiae (strain ATCC 204508 / S288c) (Baker's yeast).